A 242-amino-acid chain; its full sequence is Protein HTATIP2 (242 aa).

The residue at position 2 (A2) is an N-acetylalanine. Residues 2-25 (AETEALSKLREDFRMQNKSVFILG) are required for interaction with elongation factor EEF1A1. NADPH contacts are provided by S27, G28, E29, T30, R52, R53, L92, G93, Y143, K147, L170, and R178. Y143 (proton acceptor) is an active-site residue. Residue K147 is part of the active site.

In terms of assembly, monomer. Forms homodimers during oxidative stress. Interacts (via N-terminus) with elongation factor EEF1A1 (via middle-region); the interaction is direct and competes with EEF1A1 binding to guanyl-nucleotide exchange factor EEF1B2, thereby inhibiting GDP for GTP exchange and reactivation of EEF1A1. Interacts with nuclear transport receptors XPO4, IPO5/RANBP5, IPO7, IPO9 and KPNB1 as well as GCN1L1/GCN1 and LRPPRC probably through their HEAT repeats. Binds NCOA5/CIA. Interacts (via N-terminus) with proteasome subunit PSMD4/s5a. As to quaternary structure, (Microbial infection) Interacts with HIV-1 Tat (via activation domain). High levels in liver, lung, skeletal muscle, pancreas and placenta. Moderate levels in heart and kidney. Low levels in brain. Not expressed or low levels in variant small cell lung carcinomas, 33% of hepatocellular carcinomas and neuroblastomas. Levels are reduced in the heart of patients with hypertrophic cardiomyopathy and failing hearts.

It localises to the cytoplasm. In terms of biological role, represses translation by preventing reactivation of elongation factor eEF1A. May also inhibit nuclear import by competing with nuclear import substrates for binding to a subset of nuclear transport receptors. Has additionally been proposed to act as a redox sensor involved in cellular oxidative stress surveillance. The sequence is that of Protein HTATIP2 from Homo sapiens (Human).